A 39-amino-acid polypeptide reads, in one-letter code: Photosystem II reaction center protein J (39 aa).

A helical transmembrane segment spans residues 9-29; sequence LWMVATVGGLAAGGLLILFVF.

This sequence belongs to the PsbJ family. In terms of assembly, PSII is composed of 1 copy each of membrane proteins PsbA, PsbB, PsbC, PsbD, PsbE, PsbF, PsbH, PsbI, PsbJ, PsbK, PsbL, PsbM, PsbT, PsbX, PsbY, PsbZ, Psb30/Ycf12, at least 3 peripheral proteins of the oxygen-evolving complex and a large number of cofactors. It forms dimeric complexes.

It localises to the plastid. Its subcellular location is the chloroplast thylakoid membrane. In terms of biological role, one of the components of the core complex of photosystem II (PSII). PSII is a light-driven water:plastoquinone oxidoreductase that uses light energy to abstract electrons from H(2)O, generating O(2) and a proton gradient subsequently used for ATP formation. It consists of a core antenna complex that captures photons, and an electron transfer chain that converts photonic excitation into a charge separation. The sequence is that of Photosystem II reaction center protein J from Emiliania huxleyi (Coccolithophore).